The chain runs to 215 residues: MSKTIHYQKTHFITSAPDIRHLPEDEGIEVAFAGRSNAGKSSALNRLTNQKSLAKTSKTPGRTQLINLFKVEENCHIVDLPGYGFAQVPLEMKKKWQKSLGEYLQKRQCLQGLVVLMDIRHPLKDIDQQLVFWAVDQNIPVQILLTKADKLKSGARKAQVLKVREAAVDFGGEVEVDAFSSLKGIGVDKLRAKLDEWFAPAFELDDEFIEDLDAE.

In terms of domain architecture, EngB-type G spans 26–200 (EGIEVAFAGR…RAKLDEWFAP (175 aa)). GTP is bound by residues 34–41 (GRSNAGKS), 61–65 (GRTQL), 79–82 (DLPG), 146–149 (TKAD), and 179–181 (FSS). Positions 41 and 63 each coordinate Mg(2+).

This sequence belongs to the TRAFAC class TrmE-Era-EngA-EngB-Septin-like GTPase superfamily. EngB GTPase family. Requires Mg(2+) as cofactor.

Its function is as follows. Necessary for normal cell division and for the maintenance of normal septation. The chain is Probable GTP-binding protein EngB from Aliivibrio fischeri (strain ATCC 700601 / ES114) (Vibrio fischeri).